A 375-amino-acid chain; its full sequence is uncharacterized protein (375 aa).

The protein belongs to the IMPDH/GMPR family.

This is an uncharacterized protein from Mycobacterium leprae (strain TN).